A 71-amino-acid chain; its full sequence is MSVLINGTCFPGLFILSHLDGDEGLLSHAGDEGLSTLSTQEALLPSHSTVLTSHTLTAFRTRYLPSLVLII.

This is an uncharacterized protein from Homo sapiens (Human).